The primary structure comprises 374 residues: Alanine racemase (374 aa).

The Proton acceptor; specific for D-alanine role is filled by Lys34. Lys34 bears the N6-(pyridoxal phosphate)lysine mark. Arg147 lines the substrate pocket. The active-site Proton acceptor; specific for L-alanine is the Tyr271. Position 319 (Met319) interacts with substrate.

It belongs to the alanine racemase family. Pyridoxal 5'-phosphate serves as cofactor.

It catalyses the reaction L-alanine = D-alanine. It functions in the pathway amino-acid biosynthesis; D-alanine biosynthesis; D-alanine from L-alanine: step 1/1. Its function is as follows. Catalyzes the interconversion of L-alanine and D-alanine. May also act on other amino acids. The sequence is that of Alanine racemase (alr) from Haemophilus ducreyi (strain 35000HP / ATCC 700724).